A 394-amino-acid polypeptide reads, in one-letter code: MVRWLTAGESHGPALVATVEGLPAGIRVTSDDIAAELARRRLGHGRGARMSFERDVVELLGGLRHGVSLGGPISVVVRNSEWPKWERVMSPDPVDPAALAGLGRNAPLTRPRPGHADLAGMQKYGFDDARPVLERASARETAARVALGTAAKALLRQAYGIELLSHVVAIGAAEVPPGLPAPTSLAAIDANPVRCADQATSERMVAEIDAAQADSDTLGGIVEVLAYGCPPGLGSYVHGDRRLDARLAGELMGIQAIKGVEFGDGFTTARRRGSVAHDEIEPVGGVGRRVRRATDRAGGVEGGMTTGEPLRVRVAMKPISSLTRPLSTVDVTTGEAAVAINQRSDVCAVPAAGVVTEAMVALVLADAALEKFGGDSVEETRRNCEGYLKSLVIH.

NADP(+)-binding residues include R40 and R46. Residues 135-137, 255-256, G302, 317-321, and R343 each bind FMN; these read RAS, QA, and KPISS.

It belongs to the chorismate synthase family. Homotetramer. Requires FMNH2 as cofactor.

The catalysed reaction is 5-O-(1-carboxyvinyl)-3-phosphoshikimate = chorismate + phosphate. The protein operates within metabolic intermediate biosynthesis; chorismate biosynthesis; chorismate from D-erythrose 4-phosphate and phosphoenolpyruvate: step 7/7. In terms of biological role, catalyzes the anti-1,4-elimination of the C-3 phosphate and the C-6 proR hydrogen from 5-enolpyruvylshikimate-3-phosphate (EPSP) to yield chorismate, which is the branch point compound that serves as the starting substrate for the three terminal pathways of aromatic amino acid biosynthesis. This reaction introduces a second double bond into the aromatic ring system. This is Chorismate synthase from Frankia alni (strain DSM 45986 / CECT 9034 / ACN14a).